We begin with the raw amino-acid sequence, 426 residues long: C4-dicarboxylate transport protein (426 aa).

8 helical membrane passes run 4-24 (SIFT…ILLG), 44-64 (LIKM…IAGM), 76-96 (IALL…LVVV), 142-162 (IGAF…MFGF), 184-204 (VIFG…FGAM), 222-242 (LILC…GSIA), 326-346 (IWHQ…AAGV), and 352-372 (IVLA…LALI).

It belongs to the dicarboxylate/amino acid:cation symporter (DAACS) (TC 2.A.23) family.

Its subcellular location is the cell inner membrane. Functionally, responsible for the transport of dicarboxylates such as succinate, fumarate, and malate from the periplasm across the membrane. This Edwardsiella ictaluri (strain 93-146) protein is C4-dicarboxylate transport protein.